The sequence spans 467 residues: MSHQHTLPVTVPAVVQGPLKTVCSPDHIQQEQAKQPTPHPTQCQVFTEIQEKGFPKHEEKRPNPVKDLPDQKCEHQQQPGPQKQQLQVKKSQQELQEQELHLEKQQLPQEPQGLLCLEQQQQQEPQMQEQHLRQQQQQQQQQQQQQQQQQQQETQEQGLCLGQKQQQQQQDMLVPQELHLRQHQEKLQDPELHLGQQQKTPEEQKLIPGEKQQELHLGQRHQEPQEQELHLGQKQKQKLHEPELQLGKQQHQKPSEPELPLGKQQQESPEPELPLGKQQQQESPEPELQLGKQQQSHEPDMAGDQKEKQKLHKPELYLRKQQYQESPDPELSLGKQQHQECQEPELQLEEKQHQKPPEPELHLGKQQESHEPDMAEDLEEKQKLGEPELHLGKQQQQQIEREGYQGPKSLGQSLKQEKASREQQLDYSHLEQEKELSDQPLDQALVKKGKQLERKKHELENRTQQEK.

The disordered stretch occupies residues E48–K467. Residues I49 to H75 are compositionally biased toward basic and acidic residues. Composition is skewed to low complexity over residues Q76–L95 and Q105–E177. Composition is skewed to basic and acidic residues over residues L178–L192 and R220–L231. Residues Q278–L290 are compositionally biased toward low complexity. 5 stretches are compositionally biased toward basic and acidic residues: residues Q295–L318, L348–D373, E380–L391, K415–S437, and K450–K467.

The protein belongs to the involucrin family. In terms of assembly, directly or indirectly cross-linked to cornifelin (CNFN). Post-translationally, substrate of transglutaminase. Specific glutamines or lysines are cross-linked to keratins, desmoplakin and to inter involucrin molecules. Keratinocytes of epidermis and other stratified squamous epithelia.

Its subcellular location is the cytoplasm. Part of the insoluble cornified cell envelope (CE) of stratified squamous epithelia. In Mus musculus (Mouse), this protein is Involucrin (Ivl).